Reading from the N-terminus, the 525-residue chain is Bifunctional purine biosynthesis protein PurH (525 aa).

Residues 1 to 145 form the MGS-like domain; that stretch reads MSNVERALIS…KNNASVGIVT (145 aa).

It belongs to the PurH family.

The enzyme catalyses (6R)-10-formyltetrahydrofolate + 5-amino-1-(5-phospho-beta-D-ribosyl)imidazole-4-carboxamide = 5-formamido-1-(5-phospho-D-ribosyl)imidazole-4-carboxamide + (6S)-5,6,7,8-tetrahydrofolate. It catalyses the reaction IMP + H2O = 5-formamido-1-(5-phospho-D-ribosyl)imidazole-4-carboxamide. It participates in purine metabolism; IMP biosynthesis via de novo pathway; 5-formamido-1-(5-phospho-D-ribosyl)imidazole-4-carboxamide from 5-amino-1-(5-phospho-D-ribosyl)imidazole-4-carboxamide (10-formyl THF route): step 1/1. The protein operates within purine metabolism; IMP biosynthesis via de novo pathway; IMP from 5-formamido-1-(5-phospho-D-ribosyl)imidazole-4-carboxamide: step 1/1. The polypeptide is Bifunctional purine biosynthesis protein PurH (Alcanivorax borkumensis (strain ATCC 700651 / DSM 11573 / NCIMB 13689 / SK2)).